Consider the following 512-residue polypeptide: Probable anion transporter 3, chloroplastic (512 aa).

The transit peptide at 1-44 directs the protein to the chloroplast; it reads MATVGSLKPLHHSSCSSSFPRNPIVNRKALLGFVFDSARKNQIR. Helical transmembrane passes span 102 to 124, 139 to 159, 167 to 187, 191 to 211, 228 to 248, 250 to 270, 324 to 344, 359 to 379, 396 to 416, 422 to 442, 462 to 482, and 486 to 506; these read VILT…VAVV, VVQS…GALV, VLAW…WAAA, LALL…MPSM, VGIS…LTPL, LSSI…LLWV, WAII…LSWM, AAWF…YAGA, KIMQ…LNFA, AAVF…GFLL, AGTL…QWLG, and AFLT…LLFA.

The protein belongs to the major facilitator superfamily. Sodium/anion cotransporter (TC 2.A.1.14) family. In terms of tissue distribution, expressed in roots.

It is found in the plastid. It localises to the chloroplast membrane. Inorganic phosphate and probable anion transporter. This is Probable anion transporter 3, chloroplastic (ANTR3) from Arabidopsis thaliana (Mouse-ear cress).